We begin with the raw amino-acid sequence, 438 residues long: Anaerobic glycerol-3-phosphate dehydrogenase subunit B (438 aa).

Belongs to the anaerobic G-3-P dehydrogenase subunit B family. As to quaternary structure, composed of a catalytic GlpA/B dimer and of membrane bound GlpC. FMN is required as a cofactor.

It catalyses the reaction a quinone + sn-glycerol 3-phosphate = dihydroxyacetone phosphate + a quinol. The protein operates within polyol metabolism; glycerol degradation via glycerol kinase pathway; glycerone phosphate from sn-glycerol 3-phosphate (anaerobic route): step 1/1. Conversion of glycerol 3-phosphate to dihydroxyacetone. Uses fumarate or nitrate as electron acceptor. This chain is Anaerobic glycerol-3-phosphate dehydrogenase subunit B, found in Vibrio vulnificus (strain YJ016).